A 65-amino-acid polypeptide reads, in one-letter code: MKVKMKTRSGAAKRFKKTANGFKRKQAFKSHILTKKSAKRIRQLRGLKMVDKSDEAAVRRMCPYI.

It belongs to the bacterial ribosomal protein bL35 family.

This Psychrobacter arcticus (strain DSM 17307 / VKM B-2377 / 273-4) protein is Large ribosomal subunit protein bL35.